Here is a 555-residue protein sequence, read N- to C-terminus: Spermine oxidase (555 aa).

FAD-binding positions include Ala35, Glu55, Arg63, 79–80 (TW), and Val261. Positions 271–306 (ARPRGPEIEPRGEGDHNHDTGEGGQGGEEPRGGRWD) are disordered. The span at 274 to 291 (RGPEIEPRGEGDHNHDTG) shows a compositional bias: basic and acidic residues. FAD is bound by residues Glu519 and 528–529 (TT).

It belongs to the flavin monoamine oxidase family. It depends on FAD as a cofactor. Widely expressed. Expressed in human tumor cell lines. Isoform 4 is only found in an embryonal kidney cell line.

It localises to the cytoplasm. It is found in the nucleus. The enzyme catalyses spermine + O2 + H2O = 3-aminopropanal + spermidine + H2O2. The protein operates within amine and polyamine degradation; spermine degradation. Its activity is regulated as follows. Inhibited at more than 90% by SL-11144, SL-11150 and SL-11158, at concentrations less than 1 uM. Flavoenzyme which catalyzes the oxidation of spermine to spermidine. Can also use N(1)-acetylspermine and spermidine as substrates, with different affinity depending on the isoform (isozyme) and on the experimental conditions. Plays an important role in the regulation of polyamine intracellular concentration and has the potential to act as a determinant of cellular sensitivity to the antitumor polyamine analogs. May contribute to beta-alanine production via aldehyde dehydrogenase conversion of 3-amino-propanal. This Homo sapiens (Human) protein is Spermine oxidase (SMOX).